Reading from the N-terminus, the 260-residue chain is (+)-borneol dehydrogenase 1 (260 aa).

NAD(+) is bound by residues 20–26 (GGASGIG), Asp-44, 67–68 (DV), and 94–96 (NAG). Residue Ser-148 is the Proton donor of the active site. NAD(+) is bound by residues Tyr-161, Lys-165, and Thr-196. Tyr-161 serves as the catalytic Proton acceptor. Lys-165 acts as the Proton donor/acceptor in catalysis.

It belongs to the short-chain dehydrogenases/reductases (SDR) family.

It carries out the reaction (1R,2S,4R)-borneol + NAD(+) = (1R,4R)-camphor + NADH + H(+). In terms of biological role, involved in the biosynthesis of monoterpene natural products related to camphor. Catalayzes the oxidation of (+)-borneol to (+)-camphor. Shows absolute selectivity towards (+)-borneol. Catalyzes the oxidation of (+)-isoborneol to (-)-camphor. Shows absolute selectivity towards (+)-isoborneol. This is (+)-borneol dehydrogenase 1 from Salvia officinalis (Sage).